Here is a 208-residue protein sequence, read N- to C-terminus: A-type ATP synthase subunit E (208 aa).

The segment at 37–57 (DAEKTAEAEKNKILDNGKKQS) is disordered.

It belongs to the V-ATPase E subunit family. In terms of assembly, has multiple subunits with at least A(3), B(3), C, D, E, F, H, I and proteolipid K(x).

It localises to the cell membrane. Functionally, component of the A-type ATP synthase that produces ATP from ADP in the presence of a proton gradient across the membrane. The sequence is that of A-type ATP synthase subunit E from Methanobrevibacter smithii (strain ATCC 35061 / DSM 861 / OCM 144 / PS).